A 213-amino-acid polypeptide reads, in one-letter code: ATP-dependent dethiobiotin synthetase BioD (213 aa).

Glu-12–Tyr-17 is an ATP binding site. Thr-16 is a Mg(2+) binding site. Lys-37 is an active-site residue. Residues Asp-46, Glu-107–Gly-110, and Asn-167–Asn-168 contribute to the ATP site. Mg(2+) is bound by residues Asp-46 and Glu-107.

This sequence belongs to the dethiobiotin synthetase family. Homodimer. The cofactor is Mg(2+).

The protein resides in the cytoplasm. The enzyme catalyses (7R,8S)-7,8-diammoniononanoate + CO2 + ATP = (4R,5S)-dethiobiotin + ADP + phosphate + 3 H(+). It functions in the pathway cofactor biosynthesis; biotin biosynthesis; biotin from 7,8-diaminononanoate: step 1/2. In terms of biological role, catalyzes a mechanistically unusual reaction, the ATP-dependent insertion of CO2 between the N7 and N8 nitrogen atoms of 7,8-diaminopelargonic acid (DAPA, also called 7,8-diammoniononanoate) to form a ureido ring. The protein is ATP-dependent dethiobiotin synthetase BioD of Akkermansia muciniphila (strain ATCC BAA-835 / DSM 22959 / JCM 33894 / BCRC 81048 / CCUG 64013 / CIP 107961 / Muc).